The following is a 297-amino-acid chain: UDP-N-acetylenolpyruvoylglucosamine reductase (297 aa).

In terms of domain architecture, FAD-binding PCMH-type spans 22-195 (RVGGPAQYYA…LAGRFRLHRA (174 aa)). The active site involves arginine 169. Catalysis depends on serine 223, which acts as the Proton donor. The active site involves glutamate 293.

Belongs to the MurB family. The cofactor is FAD.

It localises to the cytoplasm. It carries out the reaction UDP-N-acetyl-alpha-D-muramate + NADP(+) = UDP-N-acetyl-3-O-(1-carboxyvinyl)-alpha-D-glucosamine + NADPH + H(+). The protein operates within cell wall biogenesis; peptidoglycan biosynthesis. Cell wall formation. In Chloroflexus aggregans (strain MD-66 / DSM 9485), this protein is UDP-N-acetylenolpyruvoylglucosamine reductase.